Here is a 153-residue protein sequence, read N- to C-terminus: ORM1-like protein 3 (153 aa).

Positions 1–17 (MNVGTAHSEVNPNTRVM) are important for ceramide level-sensing. Over 1-21 (MNVGTAHSEVNPNTRVMNSRG) the chain is Cytoplasmic. Helical transmembrane passes span 22 to 42 (IWLS…SIPF) and 43 to 63 (VSVP…MYIF). Topologically, residues 64-94 (LHTVKGTPFETPDQGKARLLTHWEQMDYGVQ) are cytoplasmic. A helical transmembrane segment spans residues 95–117 (FTASRKFLTITPIVLYFLTSFYT). The Extracellular segment spans residues 118 to 121 (KYDQ). A helical transmembrane segment spans residues 122–142 (IHFVLNTVSLMSVLIPKLPQL). At P137 the chain carries Hydroxyproline. The Cytoplasmic portion of the chain corresponds to 143–153 (HGVRIFGINKY).

This sequence belongs to the ORM family. Ceramide-sensitive subunit of the serine palmitoyltransferase (SPT) complex, which is also composed of SPTLC1, SPTLC2/3 and SPTSSA/B. In terms of processing, when hydroxylated at Pro-137, ubiquitinated via 'Lys-48'-linkage, leading to proteasomal degradation. In endothelial cells, ORMDL3 proteasomal degradation is controlled by the sphingosine 1-phosphate receptor signaling pathway.

The protein resides in the endoplasmic reticulum membrane. Plays an essential role in the homeostatic regulation of sphingolipid de novo biosynthesis by modulating the activity of the serine palmitoyltransferase (SPT) in response to ceramide levels. When complexed to SPT, the binding of ceramides to its N-terminus stabilizes a conformation that block SPT substrate entry, hence preventing SPT catalytic activity. Through this mechanism, maintains ceramide levels at sufficient concentrations for the production of complex sphingolipids, but which prevents the accumulation of ceramides to levels that trigger apoptosis. This Ailuropoda melanoleuca (Giant panda) protein is ORM1-like protein 3 (ORMDL3).